We begin with the raw amino-acid sequence, 108 residues long: Cytochrome c (108 aa).

The heme c site is built by Cys-19, Cys-22, His-23, and Met-85.

The protein belongs to the cytochrome c family. In terms of processing, binds 1 heme c group covalently per subunit.

The protein resides in the mitochondrion intermembrane space. Its function is as follows. Electron carrier protein. The oxidized form of the cytochrome c heme group can accept an electron from the heme group of the cytochrome c1 subunit of cytochrome reductase. Cytochrome c then transfers this electron to the cytochrome oxidase complex, the final protein carrier in the mitochondrial electron-transport chain. The protein is Cytochrome c of Cochliobolus lunatus (Filamentous fungus).